Here is a 1642-residue protein sequence, read N- to C-terminus: Cholesterol transporter ABCA5 (1642 aa).

A helical membrane pass occupies residues S32–M52. N86 carries an N-linked (GlcNAc...) asparagine glycan. The next 5 helical transmembrane spans lie at V220 to I240, L264 to I284, I297 to L317, G328 to I348, and L355 to M375. The N-linked (GlcNAc...) asparagine glycan is linked to N388. A helical membrane pass occupies residues L396 to Y416. N458 is a glycosylation site (N-linked (GlcNAc...) asparagine). Residues I478–Y713 form the ABC transporter 1 domain. G514–S521 provides a ligand contact to ATP. A helical transmembrane segment spans residues A864–H884. N919 carries an N-linked (GlcNAc...) asparagine glycan. The helical transmembrane segment at V967–I987 threads the bilayer. A glycan (N-linked (GlcNAc...) asparagine) is linked at N996. 6 consecutive transmembrane segments (helical) span residues L1021–M1041, V1071–F1091, F1102–I1122, S1138–L1158, A1164–I1184, and L1207–H1227. The region spanning I1290–K1533 is the ABC transporter 2 domain. G1333–S1340 is a binding site for ATP.

It belongs to the ABC transporter superfamily. ABCA family. In terms of processing, N-glycosylated. As to expression, expressed in cardiomyocytes, oligodendrocytes and astrocytes in brain, alveolar type 2 cells in lung and follicular cells in the thyroid gland (at protein level). Detected in brain, testis, lung, heart, liver, kidney, skeletal muscle and placenta. Strongly expressed in the basal cells of the seminiferous tubules, interstitial cells consisting of Leydig cells, as well as the tunica albuginea. In the epididymis, specifically and very strongly expressed in the connective tissue outlining the cylindrical epithelium in the corpus and cauda regions, including fibrocytes and smooth muscle cells, as well as within the basal and tall columnar cells of the corpus cylindrical epithelium. Highly expressed in the brain with high expression in cortical and hippocampal neurons and moderately in the lung.

It is found in the golgi apparatus membrane. The protein localises to the lysosome membrane. Its subcellular location is the late endosome membrane. The protein resides in the cell membrane. It catalyses the reaction cholesterol(in) + ATP + H2O = cholesterol(out) + ADP + phosphate + H(+). Functionally, cholesterol efflux transporter in macrophages that is responsible for APOAI/high-density lipoproteins (HDL) formation at the plasma membrane under high cholesterol levels and participates in reverse cholesterol transport. May play a role in the processing of autolysosomes. The polypeptide is Cholesterol transporter ABCA5 (Mus musculus (Mouse)).